The primary structure comprises 351 residues: Photosystem II D2 protein (351 aa).

A helical transmembrane segment spans residues 39–59 (CAFLALGGWLTGTTFVTSWYT). His116 provides a ligand contact to chlorophyll a. A helical membrane pass occupies residues 123-139 (GFMLRQFEIARLVGIRP). Gln128 and Asn141 together coordinate pheophytin a. Residues 151–164 (VFVSVFLMYPLGQS) form a helical membrane-spanning segment. His196 is a chlorophyll a binding site. The helical transmembrane segment at 206-226 (GALLCAIHGATVENTLFEDGE) threads the bilayer. His213 and Phe260 together coordinate a plastoquinone. A Fe cation-binding site is contributed by His213. Position 267 (His267) interacts with Fe cation. The helical transmembrane segment at 277-293 (GLWMSAVGIVGLALNLR) threads the bilayer.

This sequence belongs to the reaction center PufL/M/PsbA/D family. PSII is composed of 1 copy each of membrane proteins PsbA, PsbB, PsbC, PsbD, PsbE, PsbF, PsbH, PsbI, PsbJ, PsbK, PsbL, PsbM, PsbT, PsbX, PsbY, PsbZ, Psb30/Ycf12, peripheral proteins PsbO, CyanoQ (PsbQ), PsbU, PsbV and a large number of cofactors. It forms dimeric complexes. The D1/D2 heterodimer binds P680, chlorophylls that are the primary electron donor of PSII, and subsequent electron acceptors. It shares a non-heme iron and each subunit binds pheophytin, quinone, additional chlorophylls, carotenoids and lipids. There is also a Cl(-1) ion associated with D1 and D2, which is required for oxygen evolution. The PSII complex binds additional chlorophylls, carotenoids and specific lipids. is required as a cofactor.

The protein localises to the cellular thylakoid membrane. It catalyses the reaction 2 a plastoquinone + 4 hnu + 2 H2O = 2 a plastoquinol + O2. Its function is as follows. Photosystem II (PSII) is a light-driven water:plastoquinone oxidoreductase that uses light energy to abstract electrons from H(2)O, generating O(2) and a proton gradient subsequently used for ATP formation. It consists of a core antenna complex that captures photons, and an electron transfer chain that converts photonic excitation into a charge separation. The D1/D2 (PsbA/PsbD) reaction center heterodimer binds P680, the primary electron donor of PSII as well as several subsequent electron acceptors. D2 is needed for assembly of a stable PSII complex. The polypeptide is Photosystem II D2 protein (Trichormus variabilis (strain ATCC 29413 / PCC 7937) (Anabaena variabilis)).